We begin with the raw amino-acid sequence, 296 residues long: 33 kDa chaperonin (296 aa).

Intrachain disulfides connect Cys233-Cys235 and Cys267-Cys270.

Belongs to the HSP33 family. Under oxidizing conditions two disulfide bonds are formed involving the reactive cysteines. Under reducing conditions zinc is bound to the reactive cysteines and the protein is inactive.

Its subcellular location is the cytoplasm. Redox regulated molecular chaperone. Protects both thermally unfolding and oxidatively damaged proteins from irreversible aggregation. Plays an important role in the bacterial defense system toward oxidative stress. The sequence is that of 33 kDa chaperonin from Actinobacillus pleuropneumoniae serotype 7 (strain AP76).